A 357-amino-acid polypeptide reads, in one-letter code: Protein XRP2 (357 aa).

A compositionally biased stretch (basic residues) spans 1-11 (MGCFFSKRRKP). The interval 1 to 39 (MGCFFSKRRKPAQGGQQQGASQEPAAGEEKAPQYSWDQR) is disordered. Gly2 is lipidated: N-myristoyl glycine. Cys3 carries S-palmitoyl cysteine lipidation. Residues 12-25 (AQGGQQQGASQEPA) are compositionally biased toward low complexity. One can recognise a C-CAP/cofactor C-like domain in the interval 32 to 186 (PQYSWDQRAK…TWSNIHDFTP (155 aa)). GTP is bound by residues 105–106 (GS) and 122–125 (QQFR).

The protein belongs to the TBCC family. In terms of processing, myristoylated on Gly-2; which may be required for membrane targeting. Post-translationally, palmitoylated on Cys-3; which may be required for plasma membrane targeting.

It localises to the cell membrane. Functionally, acts as a GTPase-activating protein (GAP) for tubulin in concert with tubulin-specific chaperone C, but does not enhance tubulin heterodimerization. Acts as a GTPase-activating protein. May act as guanine nucleotide dissociation inhibitor towards ADP-ribosylation factor-like proteins. The chain is Protein XRP2 (RP2) from Gallus gallus (Chicken).